The sequence spans 506 residues: Cytochrome P450 monooxygenase atr2 (506 aa).

Residues 18-38 traverse the membrane as a helical segment; the sequence is VFAGLVLASLLTTTYCIWNIF. Residue Cys451 participates in heme binding.

The protein belongs to the cytochrome P450 family. Requires heme as cofactor.

Its subcellular location is the membrane. The enzyme catalyses 4-O-demethylbarbatate + reduced [NADPH--hemoprotein reductase] + O2 = proatranorin II + oxidized [NADPH--hemoprotein reductase] + H2O + H(+). The catalysed reaction is proatranorin II + reduced [NADPH--hemoprotein reductase] + O2 = proatranorin III + oxidized [NADPH--hemoprotein reductase] + 2 H2O + H(+). It carries out the reaction proatranorin I + reduced [NADPH--hemoprotein reductase] + O2 = proatranorin IV + oxidized [NADPH--hemoprotein reductase] + H2O + H(+). It catalyses the reaction proatranorin IV + reduced [NADPH--hemoprotein reductase] + O2 = atranorin + oxidized [NADPH--hemoprotein reductase] + 2 H2O + H(+). It functions in the pathway secondary metabolite biosynthesis; terpenoid biosynthesis. Its function is as follows. Cytochrome P450 monooxygenase; part of the gene cluster that mediates the biosynthesis of atranorin, a depside of polyketide origin that accumulates in the cortical or medullary layers of lichen thalli. Atr2 performs the oxidation at the C-9 position of 4-O-demethylbarbatic acid to yield proatranorin III via proatranorin II. Atr2 is also able to oxidize the atr3 product proatranorin I to produce the final compound atranorin. The first step in the pathway is performed by the non-reducing polyketide synthase atr1 that produces 4-O-demethylbarbatic acid composed of two 3-methylorsellinic acid (3MOA) moieties. The pathway continues with the actions of the cytochrome P450 monooygenase atr2 that catalizes the oxidation of c-9 and the O-methyltransferase atr3 that performs the methylation of the carboxyl group to yield atranorin, via the proatranorin II and III intermediates if atr2 acts first, or the proatranorin I intermediate if atr3 acts first. In Stereocaulon alpinum (Alpine snow lichen), this protein is Cytochrome P450 monooxygenase atr2.